The primary structure comprises 337 residues: D-lactate dehydrogenase (337 aa).

Residues 156 to 157, aspartate 176, 207 to 208, asparagine 213, 234 to 236, and aspartate 260 contribute to the NAD(+) site; these read HI, VP, and CSR. Arginine 236 is an active-site residue. Residue glutamate 265 is part of the active site. Histidine 297 acts as the Proton donor in catalysis.

Belongs to the D-isomer specific 2-hydroxyacid dehydrogenase family. As to quaternary structure, homodimer.

The enzyme catalyses (R)-lactate + NAD(+) = pyruvate + NADH + H(+). This chain is D-lactate dehydrogenase, found in Lactobacillus helveticus (Lactobacillus suntoryeus).